We begin with the raw amino-acid sequence, 202 residues long: MNLEQIYKDCGAYLQGHFLLSSGKHSEFYLQSAKVLEDPKLAGKLCDELAKIIASYDIKFDSICSPALGGILAGYELARACNKRFIFTERVEGVMNLRRGFEVKKGEKFIVCEDIITTGGSALESAKIIESLGGEVVGFAALANRGFCAVKNLNNPRKENAKLPENLPLFALGNFEFEIYEANVCPLCEKGTKAIKPGSRGN.

5-phospho-alpha-D-ribose 1-diphosphate is bound at residue 113–121 (EDIITTGGS). Residues threonine 117 and arginine 145 each coordinate orotate.

The protein belongs to the purine/pyrimidine phosphoribosyltransferase family. PyrE subfamily. As to quaternary structure, homodimer. Mg(2+) is required as a cofactor.

The catalysed reaction is orotidine 5'-phosphate + diphosphate = orotate + 5-phospho-alpha-D-ribose 1-diphosphate. The protein operates within pyrimidine metabolism; UMP biosynthesis via de novo pathway; UMP from orotate: step 1/2. Functionally, catalyzes the transfer of a ribosyl phosphate group from 5-phosphoribose 1-diphosphate to orotate, leading to the formation of orotidine monophosphate (OMP). The sequence is that of Orotate phosphoribosyltransferase from Campylobacter lari (strain RM2100 / D67 / ATCC BAA-1060).